A 309-amino-acid chain; its full sequence is Putative glycosyltransferase 48 (309 aa).

This sequence belongs to the glycosyltransferase group 1 family. Glycosyltransferase 4 subfamily.

This Saccharolobus islandicus (Sulfolobus islandicus) protein is Putative glycosyltransferase 48 (SIFV0048).